A 357-amino-acid chain; its full sequence is D-alanine--D-alanine ligase (357 aa).

In terms of domain architecture, ATP-grasp spans 134–339 (KQLFEHRGLP…YPDLIAKLID (206 aa)). 167–222 (NDKLTYPVFVKPANLGSSVGISKCNNEEELKSGIAEAFQFDRKLVIEQGINAREIE) serves as a coordination point for ATP. Asp-293, Glu-306, and Asn-308 together coordinate Mg(2+).

The protein belongs to the D-alanine--D-alanine ligase family. The cofactor is Mg(2+). It depends on Mn(2+) as a cofactor.

The protein resides in the cytoplasm. It catalyses the reaction 2 D-alanine + ATP = D-alanyl-D-alanine + ADP + phosphate + H(+). The protein operates within cell wall biogenesis; peptidoglycan biosynthesis. Cell wall formation. In Staphylococcus epidermidis (strain ATCC 35984 / DSM 28319 / BCRC 17069 / CCUG 31568 / BM 3577 / RP62A), this protein is D-alanine--D-alanine ligase.